The primary structure comprises 122 residues: Large ribosomal subunit protein bL17 (122 aa).

Belongs to the bacterial ribosomal protein bL17 family. Part of the 50S ribosomal subunit. Contacts protein L32.

This is Large ribosomal subunit protein bL17 from Neisseria meningitidis serogroup B (strain ATCC BAA-335 / MC58).